The sequence spans 208 residues: Negative modulator of initiation of replication (208 aa).

The interaction with DNA stretch occupies residues 115–116; that stretch reads AV.

This sequence belongs to the SeqA family. As to quaternary structure, homodimer. Polymerizes to form helical filaments.

The protein resides in the cytoplasm. Its function is as follows. Negative regulator of replication initiation, which contributes to regulation of DNA replication and ensures that replication initiation occurs exactly once per chromosome per cell cycle. Binds to pairs of hemimethylated GATC sequences in the oriC region, thus preventing assembly of replication proteins and re-initiation at newly replicated origins. Repression is relieved when the region becomes fully methylated. The sequence is that of Negative modulator of initiation of replication from Shewanella frigidimarina (strain NCIMB 400).